A 112-amino-acid polypeptide reads, in one-letter code: Protein FAM32A (112 aa).

Residues 15 to 35 (KGCGDMSLGKKKKKKNKANDQ) form a disordered region.

Belongs to the FAM32 family.

It localises to the nucleus. In terms of biological role, may induce G2 arrest and apoptosis. May also increase cell sensitivity to apoptotic stimuli. In Xenopus tropicalis (Western clawed frog), this protein is Protein FAM32A (fam32a).